Here is a 119-residue protein sequence, read N- to C-terminus: Insulin growth factor-like family member 2 (119 aa).

Positions Met1–Ala25 are cleaved as a signal peptide.

This sequence belongs to the IGFL family. In terms of tissue distribution, detected in cerebellum, heart, placenta, spleen, stomach, testis and thymus.

Its subcellular location is the secreted. Its function is as follows. Potential ligand of the IGFLR1 cell membrane receptor. The protein is Insulin growth factor-like family member 2 (IGFL2) of Homo sapiens (Human).